The primary structure comprises 228 residues: Deoxyribose-phosphate aldolase (228 aa).

Catalysis depends on D93, which acts as the Proton donor/acceptor. Residue K159 is the Schiff-base intermediate with acetaldehyde of the active site. The Proton donor/acceptor role is filled by K188.

The protein belongs to the DeoC/FbaB aldolase family. DeoC type 1 subfamily.

The protein localises to the cytoplasm. The catalysed reaction is 2-deoxy-D-ribose 5-phosphate = D-glyceraldehyde 3-phosphate + acetaldehyde. It functions in the pathway carbohydrate degradation; 2-deoxy-D-ribose 1-phosphate degradation; D-glyceraldehyde 3-phosphate and acetaldehyde from 2-deoxy-alpha-D-ribose 1-phosphate: step 2/2. Functionally, catalyzes a reversible aldol reaction between acetaldehyde and D-glyceraldehyde 3-phosphate to generate 2-deoxy-D-ribose 5-phosphate. The sequence is that of Deoxyribose-phosphate aldolase from Carboxydothermus hydrogenoformans (strain ATCC BAA-161 / DSM 6008 / Z-2901).